The primary structure comprises 136 residues: Transmembrane protein 203 (136 aa).

Positions 1 to 51 (MLFSLRELVQWLGFATFEIFVHLLALLVFSVLLALRVDGLVPGLSWWNVFV) are interaction with STING1. 4 consecutive transmembrane segments (helical) span residues 14–34 (FATF…VLLA), 50–72 (FVPF…VRLF), 81–101 (VLRL…EMLL), and 112–132 (LWFG…MIRA). The segment at 52-136 (PFFAADGLST…LLMIRACRVN (85 aa)) is required for the lysosomal localization of the STING-TMEM203 complex.

Homodimer. Interacts with ATP2A2, ITPR3 and STIM1. Interacts with STING1 (via transmembrane domain). In terms of tissue distribution, increased expression seen in T-lymphocytes from patients with systemic lupus erythematosus (SLE).

Its subcellular location is the endoplasmic reticulum membrane. The protein resides in the endoplasmic reticulum-Golgi intermediate compartment. It is found in the lysosome membrane. Involved in the regulation of cellular calcium homeotasis. Required for spermatogenesis. Acts as a regulator of STING-mediated inflammatory signaling in macrophages. Forms a complex with STING, promoting the activity of TBK1 kinase and the transcription factor IRF3, leading to activation of type I interferon expression. The protein is Transmembrane protein 203 (TMEM203) of Homo sapiens (Human).